The following is a 180-amino-acid chain: ATP synthase subunit delta (180 aa).

Belongs to the ATPase delta chain family. As to quaternary structure, F-type ATPases have 2 components, F(1) - the catalytic core - and F(0) - the membrane proton channel. F(1) has five subunits: alpha(3), beta(3), gamma(1), delta(1), epsilon(1). CF(0) has four main subunits: a(1), b(1), b'(1) and c(10-14). The alpha and beta chains form an alternating ring which encloses part of the gamma chain. F(1) is attached to F(0) by a central stalk formed by the gamma and epsilon chains, while a peripheral stalk is formed by the delta, b and b' chains.

The protein resides in the cellular thylakoid membrane. In terms of biological role, f(1)F(0) ATP synthase produces ATP from ADP in the presence of a proton or sodium gradient. F-type ATPases consist of two structural domains, F(1) containing the extramembraneous catalytic core and F(0) containing the membrane proton channel, linked together by a central stalk and a peripheral stalk. During catalysis, ATP synthesis in the catalytic domain of F(1) is coupled via a rotary mechanism of the central stalk subunits to proton translocation. Its function is as follows. This protein is part of the stalk that links CF(0) to CF(1). It either transmits conformational changes from CF(0) to CF(1) or is implicated in proton conduction. In Prochlorococcus marinus (strain MIT 9515), this protein is ATP synthase subunit delta.